Consider the following 1342-residue polypeptide: DNA-directed RNA polymerase subunit beta (1342 aa).

The protein belongs to the RNA polymerase beta chain family. In terms of assembly, the RNAP catalytic core consists of 2 alpha, 1 beta, 1 beta' and 1 omega subunit. When a sigma factor is associated with the core the holoenzyme is formed, which can initiate transcription.

The catalysed reaction is RNA(n) + a ribonucleoside 5'-triphosphate = RNA(n+1) + diphosphate. In terms of biological role, DNA-dependent RNA polymerase catalyzes the transcription of DNA into RNA using the four ribonucleoside triphosphates as substrates. This is DNA-directed RNA polymerase subunit beta from Vibrio parahaemolyticus serotype O3:K6 (strain RIMD 2210633).